We begin with the raw amino-acid sequence, 312 residues long: Light-independent protochlorophyllide reductase iron-sulfur ATP-binding protein (312 aa).

Residues 55 to 60 and lysine 84 each bind ATP; that span reads GIGKST. Serine 59 lines the Mg(2+) pocket. Residues cysteine 140 and cysteine 174 each contribute to the [4Fe-4S] cluster site. ATP-binding positions include 225-226 and 249-251; these read NR and PDL.

This sequence belongs to the NifH/BchL/ChlL family. Homodimer. Protochlorophyllide reductase is composed of three subunits; BchL, BchN and BchB. It depends on [4Fe-4S] cluster as a cofactor.

The catalysed reaction is chlorophyllide a + oxidized 2[4Fe-4S]-[ferredoxin] + 2 ADP + 2 phosphate = protochlorophyllide a + reduced 2[4Fe-4S]-[ferredoxin] + 2 ATP + 2 H2O. It functions in the pathway porphyrin-containing compound metabolism; bacteriochlorophyll biosynthesis (light-independent). In terms of biological role, component of the dark-operative protochlorophyllide reductase (DPOR) that uses Mg-ATP and reduced ferredoxin to reduce ring D of protochlorophyllide (Pchlide) to form chlorophyllide a (Chlide). This reaction is light-independent. The L component serves as a unique electron donor to the NB-component of the complex, and binds Mg-ATP. The polypeptide is Light-independent protochlorophyllide reductase iron-sulfur ATP-binding protein (Rhodopseudomonas palustris (strain HaA2)).